We begin with the raw amino-acid sequence, 485 residues long: NADH-quinone oxidoreductase subunit N (485 aa).

A run of 14 helical transmembrane segments spans residues 8–28 (LIALLPLLIVGLTVVVVMLSI), 35–55 (FLNATLSVIGLNAALVSLWFV), 71–91 (GFAMLYTGLVLLASLATCTFA), 105–125 (FYLLVLIAALGGILLANANHL), 127–147 (SLFLGIELISLPLFGLVGYAF), 159–179 (YTILSAAASSFLLFGMALVYA), 203–223 (LLAGFGLMIVGLGFKLSLVPF), 235–255 (PAPVSTFLATASKIAIFGVVM), 271–291 (VVLAIIAFASIIFGNLMALSQ), 297–317 (LLGYSSISHLGYLLVALIALQ), 326–346 (VGVYLAGYLFSSLGAFGVVSL), 373–393 (AAVMTVMMLSLAGIPMTLGFI), 408–430 (WWLVGAVVVGSAIGLYYYLRVAV), and 455–475 (IVVLISALLVLVLGIWPQPLI).

This sequence belongs to the complex I subunit 2 family. NDH-1 is composed of 13 different subunits. Subunits NuoA, H, J, K, L, M, N constitute the membrane sector of the complex.

Its subcellular location is the cell inner membrane. It catalyses the reaction a quinone + NADH + 5 H(+)(in) = a quinol + NAD(+) + 4 H(+)(out). Functionally, NDH-1 shuttles electrons from NADH, via FMN and iron-sulfur (Fe-S) centers, to quinones in the respiratory chain. The immediate electron acceptor for the enzyme in this species is believed to be ubiquinone. Couples the redox reaction to proton translocation (for every two electrons transferred, four hydrogen ions are translocated across the cytoplasmic membrane), and thus conserves the redox energy in a proton gradient. The polypeptide is NADH-quinone oxidoreductase subunit N (Escherichia coli O7:K1 (strain IAI39 / ExPEC)).